The chain runs to 323 residues: tRNA (guanine(9)-N1)-methyltransferase (323 aa).

Polar residues predominate over residues 1-16; sequence MTEQTSEATVVNNSPA. 2 disordered regions span residues 1-34 and 192-215; these read MTEQTSEATVVNNSPAPTIPKIKREKPTPEEIEE and TGAPNSESKDNDGNSNSNTTNSTD. The span at 25 to 34 shows a compositional bias: basic and acidic residues; the sequence is EKPTPEEIEE. The 221-residue stretch at 99-319 folds into the SAM-dependent MTase TRM10-type domain; sequence KAQPIPSRQI…KVLPPRKIKS (221 aa). The span at 204–215 shows a compositional bias: low complexity; the sequence is GNSNSNTTNSTD. Residues 225–226, G245, 249–253, C257, L271, and 283–285 each bind S-adenosyl-L-methionine; these read LT, DKNRH, and HVL. D249 (proton acceptor) is an active-site residue.

This sequence belongs to the class IV-like SAM-binding methyltransferase superfamily. TRM10 family. As to quaternary structure, monomer.

It is found in the cytoplasm. The protein localises to the nucleus. The catalysed reaction is guanosine(9) in tRNA + S-adenosyl-L-methionine = N(1)-methylguanosine(9) in tRNA + S-adenosyl-L-homocysteine + H(+). S-adenosyl-L-methionine-dependent guanine N(1)-methyltransferase that catalyzes the formation of N(1)-methylguanine at position 9 (m1G9) in cytoplasmic tRNA. This chain is tRNA (guanine(9)-N1)-methyltransferase, found in Candida albicans (strain SC5314 / ATCC MYA-2876) (Yeast).